Here is a 253-residue protein sequence, read N- to C-terminus: Triosephosphate isomerase (253 aa).

Substrate is bound at residue 8-10 (NWK). The Electrophile role is filled by His-93. Residue Glu-165 is the Proton acceptor of the active site. Substrate is bound by residues Gly-171, Ser-210, and 231 to 232 (GG).

It belongs to the triosephosphate isomerase family. As to quaternary structure, homodimer.

The protein localises to the cytoplasm. The catalysed reaction is D-glyceraldehyde 3-phosphate = dihydroxyacetone phosphate. The protein operates within carbohydrate biosynthesis; gluconeogenesis. Its pathway is carbohydrate degradation; glycolysis; D-glyceraldehyde 3-phosphate from glycerone phosphate: step 1/1. Its function is as follows. Involved in the gluconeogenesis. Catalyzes stereospecifically the conversion of dihydroxyacetone phosphate (DHAP) to D-glyceraldehyde-3-phosphate (G3P). This Francisella tularensis subsp. novicida (strain U112) protein is Triosephosphate isomerase.